The chain runs to 102 residues: Small ribosomal subunit protein uS10 (102 aa).

Belongs to the universal ribosomal protein uS10 family. As to quaternary structure, part of the 30S ribosomal subunit.

Its function is as follows. Involved in the binding of tRNA to the ribosomes. The sequence is that of Small ribosomal subunit protein uS10 from Finegoldia magna (strain ATCC 29328 / DSM 20472 / WAL 2508) (Peptostreptococcus magnus).